The sequence spans 503 residues: UDP-N-acetylglucosamine--peptide N-acetylglucosaminyltransferase GtfA subunit (503 aa).

Residues 1-78 (MTIYNINLGI…FTDIKIAPTS (78 aa)) form an N-terminus R-fold-1 region. 16–19 (GVEY) contacts UDP. An extended beta-sheet domain region spans residues 79–195 (VTVDDVLAYF…VYHFKDKIFY (117 aa)). The C-terminus R-fold-1 stretch occupies residues 196–306 (GKQAFVRAFM…QPKIVTIPVG (111 aa)). An N-acetyl-D-glucosamine-binding site is contributed by H242. An R-fold-2 region spans residues 307–503 (SIDSLTDSSQ…KKTVEEVLHD (197 aa)). Position 328 (R328) interacts with UDP. E332 contacts N-acetyl-D-glucosamine. Residues K333, G358, and 384–385 (HA) each bind UDP. An N-acetyl-D-glucosamine-binding site is contributed by 404–407 (EGFG). 408–412 (LTLME) provides a ligand contact to UDP.

It belongs to the glycosyltransferase group 1 family. Glycosyltransferase 4 subfamily. Monomer. Interacts with stabilizing protein GtfB, probably as a heterotetramer with 2 subunits each of GtfA and GtfB, part of the accessory SecA2/SecY2 protein translocation apparatus.

Its subcellular location is the cytoplasm. It localises to the cell membrane. The catalysed reaction is L-seryl-[protein] + UDP-N-acetyl-alpha-D-glucosamine = 3-O-[N-acetyl-alpha-D-glucosaminyl]-L-seryl-[protein] + UDP + H(+). It functions in the pathway protein modification; protein glycosylation. Functionally, required for the polymorphic O-glycosylation of serine-rich repeat protein PsrP. Catalyzes the first step in glycosylation by transferring N-acetylglucosamine from UDP-GlcNAc to serine residues in PsrP. Part of the accessory SecA2/SecY2 system specifically required to export serine-rich repeat cell wall proteins encoded upstream in the same operon. The GtfA-GtfB complex adds GlcNAc from UDP-GlcNAc to PsrP (experimentally characterized with truncated PsrP-SSR1 constructs); this subunit alone has weak N-acetylglucosaminyl transferase activity that is 10-fold stimulated by GtfB. The complex requires at least a 25 residue-long peptide for activity; the in vitro assay has only been seen to glycosylate Ser residues. The alpha linkage was shown in L.reuteri. In Streptococcus pneumoniae serotype 4 (strain ATCC BAA-334 / TIGR4), this protein is UDP-N-acetylglucosamine--peptide N-acetylglucosaminyltransferase GtfA subunit.